We begin with the raw amino-acid sequence, 190 residues long: Adenine phosphoribosyltransferase (190 aa).

The protein belongs to the purine/pyrimidine phosphoribosyltransferase family. Homodimer.

The protein localises to the cytoplasm. It catalyses the reaction AMP + diphosphate = 5-phospho-alpha-D-ribose 1-diphosphate + adenine. It participates in purine metabolism; AMP biosynthesis via salvage pathway; AMP from adenine: step 1/1. Catalyzes a salvage reaction resulting in the formation of AMP, that is energically less costly than de novo synthesis. The sequence is that of Adenine phosphoribosyltransferase from Treponema pallidum (strain Nichols).